The primary structure comprises 185 residues: MKTAQELRVGNVVMVGKDPLVVQKTEYNKSGRNAAVVKLKFKNLLTGSASESVYKADEKFDIVMLERKECTYSYFGDPMYVFMDADYNQYEIEADSMGDALNYLEEAMPVEVVFYDGRAISVELPTILVREITYTEPAVRGDTSGKVLKPAKINTGYELQVPLFCAIGDKIEIDTRTNEYRSRVN.

Belongs to the elongation factor P family.

It is found in the cytoplasm. It participates in protein biosynthesis; polypeptide chain elongation. Functionally, involved in peptide bond synthesis. Stimulates efficient translation and peptide-bond synthesis on native or reconstituted 70S ribosomes in vitro. Probably functions indirectly by altering the affinity of the ribosome for aminoacyl-tRNA, thus increasing their reactivity as acceptors for peptidyl transferase. This Bordetella avium (strain 197N) protein is Elongation factor P.